The primary structure comprises 354 residues: Peptide chain release factor 1 (354 aa).

An N5-methylglutamine modification is found at Q230.

The protein belongs to the prokaryotic/mitochondrial release factor family. Methylated by PrmC. Methylation increases the termination efficiency of RF1.

It localises to the cytoplasm. Its function is as follows. Peptide chain release factor 1 directs the termination of translation in response to the peptide chain termination codons UAG and UAA. The chain is Peptide chain release factor 1 from Leptospira interrogans serogroup Icterohaemorrhagiae serovar copenhageni (strain Fiocruz L1-130).